The following is a 147-amino-acid chain: Small ribosomal subunit protein bS16m (147 aa).

This sequence belongs to the bacterial ribosomal protein bS16 family. As to quaternary structure, component of the mitochondrial ribosome small subunit (28S) which comprises a 12S rRNA and about 30 distinct proteins.

Its subcellular location is the mitochondrion. The chain is Small ribosomal subunit protein bS16m (mrps-16) from Caenorhabditis elegans.